A 45-amino-acid polypeptide reads, in one-letter code: Mu-conotoxin-like Cal 12.1.2e (45 aa).

Intrachain disulfides connect C3–C16, C11–C28, C18–C33, and C27–C39. The residue at position 17 (W17) is a 6'-bromotryptophan. P23 bears the 4-hydroxyproline mark. W38 is subject to 6'-bromotryptophan. P40 is modified (4-hydroxyproline).

In terms of tissue distribution, expressed by the venom duct.

The protein localises to the secreted. Its function is as follows. Mu-conotoxins block voltage-gated sodium channels. This toxin reversibly blocks voltage-gated sodium channel in cephalopods, with no alteration in the voltage dependence of sodium conductance or on the kinetics of inactivation. This is Mu-conotoxin-like Cal 12.1.2e from Californiconus californicus (California cone).